Consider the following 432-residue polypeptide: Adenylosuccinate synthetase (432 aa).

GTP is bound by residues 13-19 (GDEGKGK) and 41-43 (GHT). Aspartate 14 serves as the catalytic Proton acceptor. Mg(2+)-binding residues include aspartate 14 and glycine 41. Residues 14 to 17 (DEGK), 39 to 42 (NAGH), threonine 130, arginine 144, glutamine 225, threonine 240, and arginine 304 each bind IMP. Histidine 42 (proton donor) is an active-site residue. 300–306 (ATTGRRR) contacts substrate. Residues arginine 306, 332 to 334 (KLD), and 415 to 417 (STG) each bind GTP.

It belongs to the adenylosuccinate synthetase family. In terms of assembly, homodimer. Requires Mg(2+) as cofactor.

Its subcellular location is the cytoplasm. It catalyses the reaction IMP + L-aspartate + GTP = N(6)-(1,2-dicarboxyethyl)-AMP + GDP + phosphate + 2 H(+). It participates in purine metabolism; AMP biosynthesis via de novo pathway; AMP from IMP: step 1/2. Plays an important role in the de novo pathway of purine nucleotide biosynthesis. Catalyzes the first committed step in the biosynthesis of AMP from IMP. The polypeptide is Adenylosuccinate synthetase (Shigella flexneri serotype 5b (strain 8401)).